The following is a 433-amino-acid chain: Probable exopolygalacturonase X (433 aa).

The N-terminal stretch at 1–21 (MKLTQATTLLLSLGLSLPVEG) is a signal peptide. A disordered region spans residues 30 to 54 (VGPKPPFRPLPASTPRNKTCQVQSN). Residues 43–54 (TPRNKTCQVQSN) are compositionally biased toward polar residues. Residues asparagine 46, asparagine 127, and asparagine 197 are each glycosylated (N-linked (GlcNAc...) asparagine). The stretch at 229-250 (SSNIVIQNSVINNGDDCVSFKP) is one PbH1 1 repeat. Aspartate 243 acts as the Proton donor in catalysis. A disulfide bridge links cysteine 245 with cysteine 262. N-linked (GlcNAc...) asparagine glycosylation is found at asparagine 251 and asparagine 263. Residues 252 to 272 (STEILVQNLHCNGSHGISVGS) form a PbH1 2 repeat. The active site involves histidine 266. Residues asparagine 290, asparagine 295, asparagine 327, asparagine 352, and asparagine 362 are each glycosylated (N-linked (GlcNAc...) asparagine). Residues 325 to 346 (VQNITYDKMYIENVDWAIEVTQ) form a PbH1 3 repeat. The PbH1 4 repeat unit spans residues 360 to 403 (PSNLTISDVYFNDLTGVTSGKNDPNVGTIICSSPDVCSGIHATN). The cysteines at positions 390 and 396 are disulfide-linked.

Belongs to the glycosyl hydrolase 28 family.

It is found in the secreted. It carries out the reaction [(1-&gt;4)-alpha-D-galacturonosyl](n) + H2O = alpha-D-galacturonate + [(1-&gt;4)-alpha-D-galacturonosyl](n-1). In terms of biological role, specific in hydrolyzing the terminal glycosidic bond of polygalacturonic acid and oligogalacturonates. The polypeptide is Probable exopolygalacturonase X (pgaX) (Aspergillus flavus (strain ATCC 200026 / FGSC A1120 / IAM 13836 / NRRL 3357 / JCM 12722 / SRRC 167)).